The sequence spans 204 residues: FlaA locus 22.9 kDa protein (204 aa).

Residues 115–140 (EKTAEDQKKSSEDHTEGSADSKASSE) form a disordered region.

The protein is FlaA locus 22.9 kDa protein (ylxF) of Bacillus subtilis (strain 168).